The following is a 157-amino-acid chain: Cuticle protein 19 (157 aa).

Tandem repeats lie at residues 11–14 (AAPA), 18–21 (AAPA), 24–27 (AAPA), 29–32 (AAPA), 39–42 (AAPA), and 47–50 (AAPA). A Chitin-binding type R&amp;R domain is found at 56-127 (YPKYAFEYGV…SGPSAHPAPA (72 aa)). The stretch at 141–144 (AAPA) is repeat 7.

Functionally, component of the cuticle of migratory locust which contains more than 100 different structural proteins. In Locusta migratoria (Migratory locust), this protein is Cuticle protein 19.